We begin with the raw amino-acid sequence, 459 residues long: ATP-dependent 6-phosphofructokinase (459 aa).

Residues glycine 89, 154 to 155 (RG), and 179 to 182 (GDGG) each bind ATP. Aspartate 180 is a Mg(2+) binding site. Residues 208–210 (TID), 253–255 (MGR), glutamate 309, and 368–371 (YAIR) each bind substrate. The Proton acceptor role is filled by aspartate 210.

Belongs to the phosphofructokinase type A (PFKA) family. PPi-dependent PFK group II subfamily. Atypical ATP-dependent clade 'X' sub-subfamily. As to quaternary structure, homodimer. The cofactor is Mg(2+).

The protein localises to the cytoplasm. It catalyses the reaction beta-D-fructose 6-phosphate + ATP = beta-D-fructose 1,6-bisphosphate + ADP + H(+). It participates in carbohydrate degradation; glycolysis; D-glyceraldehyde 3-phosphate and glycerone phosphate from D-glucose: step 3/4. AMP causes 20-40% inhibition and diphosphate causes 20-50% inhibition. ADP, citrate, PEP and FBP have no effect. In terms of biological role, catalyzes the phosphorylation of D-fructose 6-phosphate to fructose 1,6-bisphosphate by ATP, the first committing step of glycolysis. The sequence is that of ATP-dependent 6-phosphofructokinase from Amycolatopsis methanolica.